We begin with the raw amino-acid sequence, 478 residues long: MEILDMTVEQLRNAILDKHLKSEDIVKAYFDNIKRNEPEINAYITLCEDYALKEAKDVDKKIANGDKVGRLAGIPIAIKDNICTDGIKTTCASKMLYDFVPPYDATVIKKLKAEDAIIIGKVNMDEFAMGSSTENSAFKITKNPRDITRVPGGSSGGSAAVVAAKMAPISLGSDTGGSIRQPAAFCGVVGLKPTYGLVSRFGLIAFASSLDQIGPLGKTVKDCAELLEVISGEDELDNTSSKKHEKEDYLEGIDDGIKGMKIGMPKEFLNDGLDPEIRKCIDDTIEKLKSLGAEVCEMSLPITEEGLSAYYIISSAEASSNLARFDGIRYGYRPDDFEDVYDLMETSRSEAFGDEVKRRIMLGTYALSSGYYDAYYKRALKLKKKIKNEFKEAFENYDLILSPVSPVLPFKIGEKKADPLQMYLADIYTVNINLAGIPAISLPCSVSKEGLPIGLQLLGPHFGEKKIFRAARALEKER.

Active-site charge relay system residues include Lys-79 and Ser-154. Catalysis depends on Ser-178, which acts as the Acyl-ester intermediate.

The protein belongs to the amidase family. GatA subfamily. Heterotrimer of A, B and C subunits.

The catalysed reaction is L-glutamyl-tRNA(Gln) + L-glutamine + ATP + H2O = L-glutaminyl-tRNA(Gln) + L-glutamate + ADP + phosphate + H(+). Allows the formation of correctly charged Gln-tRNA(Gln) through the transamidation of misacylated Glu-tRNA(Gln) in organisms which lack glutaminyl-tRNA synthetase. The reaction takes place in the presence of glutamine and ATP through an activated gamma-phospho-Glu-tRNA(Gln). This Clostridium acetobutylicum (strain ATCC 824 / DSM 792 / JCM 1419 / IAM 19013 / LMG 5710 / NBRC 13948 / NRRL B-527 / VKM B-1787 / 2291 / W) protein is Glutamyl-tRNA(Gln) amidotransferase subunit A 2 (gatA2).